The chain runs to 609 residues: Interleukin-1 receptor-associated kinase 3 (609 aa).

One can recognise a Death domain in the interval 41–106 (WRGLAERLSN…RAIHLIINYG (66 aa)). Threonine 110 carries the phosphothreonine modification. Residues 178-463 (FHKDFLIGEG…SSLESTQPSL (286 aa)) enclose the Protein kinase domain. Residues 184 to 192 (IGEGEIFEV), lysine 205, 308 to 311 (SSAN), and aspartate 324 each bind ATP. Serine 480 bears the Phosphoserine mark.

This sequence belongs to the protein kinase superfamily. TKL Ser/Thr protein kinase family. Pelle subfamily. As to quaternary structure, monomer. Homodimer. May interact with IRAK4 (when phosphorylated). Interacts (when phosphorylated at Thr-110) with PIN1 (via WW domain) in response to IL33-mediated (but not TLR4 ligand LPS) dendritic cell stimulation. Expressed in inflamed lung macrophages (at protein level). Expressed in dendritic cells (at protein level). Highly expressed in liver and thymus and at lower levels in heart, brain, spleen and kidney.

It is found in the cytoplasm. It localises to the nucleus. Functionally, putative inactive protein kinase which regulates signaling downstream of immune receptors including IL1R and Toll-like receptors. Inhibits dissociation of IRAK1 and IRAK4 from the Toll-like receptor signaling complex by either inhibiting the phosphorylation of IRAK1 and IRAK4 or stabilizing the receptor complex. Upon IL33-induced lung inflammation, positively regulates expression of IL6, CSF3, CXCL2 and CCL5 mRNAs in dendritic cells. The polypeptide is Interleukin-1 receptor-associated kinase 3 (Mus musculus (Mouse)).